The primary structure comprises 427 residues: Trigger factor (427 aa).

In terms of domain architecture, PPIase FKBP-type spans 163–248 (GDTVVIDFVG…IHEVKAKEVP (86 aa)).

It belongs to the FKBP-type PPIase family. Tig subfamily.

The protein localises to the cytoplasm. The catalysed reaction is [protein]-peptidylproline (omega=180) = [protein]-peptidylproline (omega=0). In terms of biological role, involved in protein export. Acts as a chaperone by maintaining the newly synthesized protein in an open conformation. Functions as a peptidyl-prolyl cis-trans isomerase. This Streptococcus pneumoniae (strain JJA) protein is Trigger factor.